A 79-amino-acid chain; its full sequence is Cytochrome c-551 (79 aa).

Residues 1 to 14 (DGQSIYESGTSPTC) are compositionally biased toward polar residues. The disordered stretch occupies residues 1-35 (DGQSIYESGTSPTCASCHDRGTAGAPKINEPGDWD). Heme c contacts are provided by C14, C17, H18, and M55.

In terms of processing, binds 1 heme c group covalently per subunit.

In Halorhodospira halochloris (Ectothiorhodospira halochloris), this protein is Cytochrome c-551.